The primary structure comprises 189 residues: UPF0200 protein Smar_1234 (189 aa).

10–17 (GMPGAGKS) is a binding site for ATP.

It belongs to the UPF0200 family.

In Staphylothermus marinus (strain ATCC 43588 / DSM 3639 / JCM 9404 / F1), this protein is UPF0200 protein Smar_1234.